The sequence spans 421 residues: U-box domain-containing protein 25 (421 aa).

Residues Q13 to N88 form the U-box domain.

The enzyme catalyses S-ubiquitinyl-[E2 ubiquitin-conjugating enzyme]-L-cysteine + [acceptor protein]-L-lysine = [E2 ubiquitin-conjugating enzyme]-L-cysteine + N(6)-ubiquitinyl-[acceptor protein]-L-lysine.. Its pathway is protein modification; protein ubiquitination. Its function is as follows. Functions as an E3 ubiquitin ligase. The sequence is that of U-box domain-containing protein 25 (PUB25) from Arabidopsis thaliana (Mouse-ear cress).